A 793-amino-acid polypeptide reads, in one-letter code: Splicing factor 3A subunit 1 (793 aa).

The interval 1–43 is disordered; that stretch reads MPAGPVQAVPPPPPVPTEPKQPTEEEASSKEDSAPSKPVVGII. The span at 8 to 19 shows a compositional bias: pro residues; it reads AVPPPPPVPTEP. A Glycyl lysine isopeptide (Lys-Gly) (interchain with G-Cter in SUMO2) cross-link involves residue K20. Positions 21–34 are enriched in basic and acidic residues; it reads QPTEEEASSKEDSA. Residues 52 to 94 form an SURP motif 1 repeat; that stretch reads IVDKTASFVARNGPEFEARIRQNEINNPKFNFLNPNDPYHAYY. N6-acetyllysine is present on K55. Residue K131 forms a Glycyl lysine isopeptide (Lys-Gly) (interchain with G-Cter in SUMO2) linkage. One copy of the SURP motif 2 repeat lies at 166-208; sequence VVKLTAQFVARNGRQFLTQLMQKEQRNYQFDFLRPQHSLFNYF. The disordered stretch occupies residues 318–428; that stretch reads GESEEVEMEV…KIPASKMQEH (111 aa). Phosphoserine is present on residues S320, S329, and S359. Composition is skewed to acidic residues over residues 320 to 334 and 354 to 364; these read SEEV…EEDD and DMDEGSDDEEE. Residues 368–384 are compositionally biased toward pro residues; that stretch reads VPPPPETPMPPPLPPTP. The segment covering 388–397 has biased composition (basic and acidic residues); it reads IVRKDYDPKA. S413 is subject to Phosphoserine. K424 is covalently cross-linked (Glycyl lysine isopeptide (Lys-Gly) (interchain with G-Cter in SUMO2)). S451 bears the Phosphoserine mark. Residue Y456 is modified to Phosphotyrosine. The span at 488–502 shows a compositional bias: basic and acidic residues; the sequence is IGEEEIQKPEEKVTW. Disordered stretches follow at residues 488–518, 530–584, and 665–688; these read IGEE…AAQA, HKAK…TMPP, and APMP…LKTE. Residue K499 forms a Glycyl lysine isopeptide (Lys-Gly) (interchain with G-Cter in SUMO2) linkage. S508 carries the phosphoserine modification. The span at 509–518 shows a compositional bias: polar residues; it reads MARTQQAAQA. A Glycyl lysine isopeptide (Lys-Gly) (interchain with G-Cter in SUMO2) cross-link involves residue K542. The span at 665 to 675 shows a compositional bias: pro residues; it reads APMPPVHPPPP. Residues 680 to 702 form a required and sufficient for nuclear import region; the sequence is PTSKKLKTEDSLMPEEEFLRRNK. K686 is covalently cross-linked (Glycyl lysine isopeptide (Lys-Gly) (interchain with G-Cter in SUMO2)). Residues 707–793 enclose the Ubiquitin-like domain; that stretch reads IKVQVPNMQD…ALKERGGRKK (87 aa). Y759 is modified (phosphotyrosine).

In terms of assembly, component of the 17S U2 SnRNP complex, a ribonucleoprotein complex that contains small nuclear RNA (snRNA) U2 and a number of specific proteins. Part of the SF3A subcomplex of the 17S U2 SnRNP complex which is composed of three subunits; SF3A3/SAP61, SF3A2/SAP62 and SF3A1/SAP114. SF3A associates with the splicing factor SF3B and a 12S RNA unit to form the mature 17S U2 small nuclear ribonucleoprotein complex (17S U2 snRNP). SF3A1 functions as a scaffold that interacts directly with both SF3A2 and SF3A3. Identified in the spliceosome 'E' complex, a precursor of the spliceosome 'A' complex. Identified in the spliceosome 'A' and 'B' complexes. Identified in the spliceosome 'C' complex. Interacts with P2RX6; resulting in a reduction of the splicing activity. In terms of tissue distribution, ubiquitously expressed.

The protein resides in the nucleus. It is found in the nucleus speckle. Component of the 17S U2 SnRNP complex of the spliceosome, a large ribonucleoprotein complex that removes introns from transcribed pre-mRNAs. The 17S U2 SnRNP complex (1) directly participates in early spliceosome assembly and (2) mediates recognition of the intron branch site during pre-mRNA splicing by promoting the selection of the pre-mRNA branch-site adenosine, the nucleophile for the first step of splicing. Within the 17S U2 SnRNP complex, SF3A1 is part of the SF3A subcomplex that contributes to the assembly of the 17S U2 snRNP, and the subsequent assembly of the pre-spliceosome 'E' complex and the pre-catalytic spliceosome 'A' complex. Involved in pre-mRNA splicing as a component of pre-catalytic spliceosome 'B' complexes. This is Splicing factor 3A subunit 1 (SF3A1) from Homo sapiens (Human).